Here is a 294-residue protein sequence, read N- to C-terminus: MHTRFQAIWSDLSPQLQQALTPYLEQDEFPAMFTAEQVNALKTQLQCNDDELALALLPVAAACAVTPISHFNVGAIARGESGHFYFGANMEFAGAPLQQTVHAEQSAVTHAWLRGESRLVAITVNYTPCGHCRQFMNELNSGTHIAIHLPGRKVATLGDYLPDSFGPKDLNITTLLMDKVNHGYQIDNTSQLAQQALQAINRSHAPYSHSHSGIAVQMKSGKIFQGSYAENAAFNPSMPPLQAALIALNMAGENVMDIESAILIEKADSLLTQWDATQATLTALGCRQIQRVTL.

2 consecutive CMP/dCMP-type deaminase domains span residues 48-168 (NDDE…FGPK) and 187-294 (DNTS…RVTL). 89–91 (NME) is a binding site for substrate. Histidine 102 is a Zn(2+) binding site. Glutamate 104 serves as the catalytic Proton donor. 2 residues coordinate Zn(2+): cysteine 129 and cysteine 132.

This sequence belongs to the cytidine and deoxycytidylate deaminase family. Homodimer. It depends on Zn(2+) as a cofactor.

The catalysed reaction is cytidine + H2O + H(+) = uridine + NH4(+). It catalyses the reaction 2'-deoxycytidine + H2O + H(+) = 2'-deoxyuridine + NH4(+). This enzyme scavenges exogenous and endogenous cytidine and 2'-deoxycytidine for UMP synthesis. This Proteus mirabilis (strain HI4320) protein is Cytidine deaminase.